A 342-amino-acid chain; its full sequence is MQAALHELHAALGGELLGDPSLVIRRIGPLASADAETISFVSNARYRAQLAQTAAACVIVAPALAEDAAQRGAAIVTPDPYHYFARLTQWWAARLRVAPPSGVHPSAVVAADVRLGEGVSVGPLTVIEAGAVLGDGVVIASQCHIGAGVQIGAQTRLAPHVTLMPGTRLGQRCLLHGGVVIGADGFGFAPHQGRWEKIEQLGGVVVGDDVEIGANTCIDRGALDDTVIGEGVKLDNLIQIGHNVQIGAHSAMAGCAGVAGSARIGRGCTVGGGAIVLGHLELADGVHISAASVVMRSIKQPGQYSGVFPIDDNASWEKNAATLRQLHTLRDRLRTLEKKSSP.

The active-site Proton acceptor is His-242.

This sequence belongs to the transferase hexapeptide repeat family. LpxD subfamily. As to quaternary structure, homotrimer.

The catalysed reaction is a UDP-3-O-[(3R)-3-hydroxyacyl]-alpha-D-glucosamine + a (3R)-hydroxyacyl-[ACP] = a UDP-2-N,3-O-bis[(3R)-3-hydroxyacyl]-alpha-D-glucosamine + holo-[ACP] + H(+). The protein operates within bacterial outer membrane biogenesis; LPS lipid A biosynthesis. Its function is as follows. Catalyzes the N-acylation of UDP-3-O-acylglucosamine using 3-hydroxyacyl-ACP as the acyl donor. Is involved in the biosynthesis of lipid A, a phosphorylated glycolipid that anchors the lipopolysaccharide to the outer membrane of the cell. In Leptothrix cholodnii (strain ATCC 51168 / LMG 8142 / SP-6) (Leptothrix discophora (strain SP-6)), this protein is UDP-3-O-acylglucosamine N-acyltransferase.